Reading from the N-terminus, the 239-residue chain is Ribonuclease PH (239 aa).

Phosphate-binding positions include R87 and 125–127 (GTR).

It belongs to the RNase PH family. As to quaternary structure, homohexameric ring arranged as a trimer of dimers.

It catalyses the reaction tRNA(n+1) + phosphate = tRNA(n) + a ribonucleoside 5'-diphosphate. In terms of biological role, phosphorolytic 3'-5' exoribonuclease that plays an important role in tRNA 3'-end maturation. Removes nucleotide residues following the 3'-CCA terminus of tRNAs; can also add nucleotides to the ends of RNA molecules by using nucleoside diphosphates as substrates, but this may not be physiologically important. Probably plays a role in initiation of 16S rRNA degradation (leading to ribosome degradation) during starvation. The polypeptide is Ribonuclease PH (Pseudomonas aeruginosa (strain LESB58)).